A 195-amino-acid polypeptide reads, in one-letter code: Triosephosphate isomerase, cytosolic (195 aa).

Residue His37 is the Electrophile of the active site. The active-site Proton acceptor is the Glu107.

The protein belongs to the triosephosphate isomerase family. In terms of assembly, homodimer.

It localises to the cytoplasm. It catalyses the reaction D-glyceraldehyde 3-phosphate = dihydroxyacetone phosphate. The protein operates within carbohydrate biosynthesis; gluconeogenesis. Its pathway is carbohydrate degradation; glycolysis; D-glyceraldehyde 3-phosphate from glycerone phosphate: step 1/1. In Lactuca sativa (Garden lettuce), this protein is Triosephosphate isomerase, cytosolic.